The following is a 122-amino-acid chain: Large ribosomal subunit protein uL14 (122 aa).

Belongs to the universal ribosomal protein uL14 family. Part of the 50S ribosomal subunit. Forms a cluster with proteins L3 and L19. In the 70S ribosome, L14 and L19 interact and together make contacts with the 16S rRNA in bridges B5 and B8.

Binds to 23S rRNA. Forms part of two intersubunit bridges in the 70S ribosome. This is Large ribosomal subunit protein uL14 from Thermosipho africanus (strain TCF52B).